Consider the following 396-residue polypeptide: MGGGLMQLVAYGAQDIYLSGNPQITFFKVVYRRHTNFSMESIEQTFNGFPNFGKKVTCPISRNGDLIHRIYLQATVTDSIASPGLTKWAGHKLIKSVEVEIGGQRIDKHYADWLHIWNELTQTAGHWDGYKLMVNGTTASQTVAPGATTVSKTMFIPLQFWFCRNPGLALPLIALQYHEVKINLEFGDSADVMGASGASLDSAALYVDYIYLDTDERRRFAQVSHEYLIEQLQFTGDESASSKIKLNFNHPVKELIWVEKASGDGVGEYDTTYDSAKLQLNGHERFTQRTPQYFQLVQPYQHHERVPTTCVLTVDASSIETDEAVMETCTTGGINVYSFALKPEEHQPSGTCNMSRIDNATLNLQGVDTDNTVKVFAVNYNVLRVMSGMGGLAYSN.

Belongs to the NCLDV major capsid protein family.

It is found in the virion. Functionally, major protein of the capsid. This chain is Major capsid protein (MCP), found in Pyramimonas plurioculata (PoV01).